The primary structure comprises 280 residues: Virginiamycin B lyase (280 aa).

Substrate is bound at residue His215. Glu254 is a Mg(2+) binding site. Catalysis depends on His256, which acts as the Proton acceptor. Position 271 (Glu271) interacts with Mg(2+).

Belongs to the Vgb family. Monomer. Requires Mg(2+) as cofactor.

Functionally, inactivates the type B streptogramin antibiotics by linearizing the lactone ring at the ester linkage, generating a free phenylglycine carboxylate and converting the threonyl moiety into 2-amino-butenoic acid. The polypeptide is Virginiamycin B lyase (Mycobacterium sp. (strain KMS)).